Consider the following 396-residue polypeptide: Flavohemoprotein (396 aa).

The region spanning 1-136 (MLDAQTIATV…LANVFIHREA (136 aa)) is the Globin domain. His-85 lines the heme b pocket. Catalysis depends on charge relay system residues Tyr-95 and Glu-135. The reductase stretch occupies residues 147-396 (GGWEGTRPFR…YECFGPHKVL (250 aa)). The region spanning 150–255 (EGTRPFRIVA…AAPAGDFFMN (106 aa)) is the FAD-binding FR-type domain. FAD is bound by residues Tyr-188 and 204-207 (RQYS). 268–273 (GVGQTP) contributes to the NADP(+) binding site. 389–392 (CFGP) contributes to the FAD binding site.

The protein belongs to the globin family. Two-domain flavohemoproteins subfamily. It in the C-terminal section; belongs to the flavoprotein pyridine nucleotide cytochrome reductase family. In terms of assembly, monomer. Requires heme b as cofactor. FAD serves as cofactor.

It carries out the reaction 2 nitric oxide + NADPH + 2 O2 = 2 nitrate + NADP(+) + H(+). It catalyses the reaction 2 nitric oxide + NADH + 2 O2 = 2 nitrate + NAD(+) + H(+). Functionally, is involved in NO detoxification in an aerobic process, termed nitric oxide dioxygenase (NOD) reaction that utilizes O(2) and NAD(P)H to convert NO to nitrate, which protects the bacterium from various noxious nitrogen compounds. Therefore, plays a central role in the inducible response to nitrosative stress. The protein is Flavohemoprotein (hmp) of Salmonella typhimurium (strain LT2 / SGSC1412 / ATCC 700720).